We begin with the raw amino-acid sequence, 490 residues long: MKSTVEKLSPTRVRINVEVPFAELEPDFSKAYKELAQQVRLPGFRPGKAPAKLLEARVGRAAVLEQVVNAALPARYSEAVTASDVKPLGQPEIEVTKIEDGQELTFTAEVDVRPEIELPDLSGVAVTVKPVTVEDSEVEAELDALRARFGTLKGVERAAENGDFVSIDLSATVDGKEVEEAATTGLSHEIGSGQLIDGLDEAIIGLKAGEEKVFTTKLAAGEFAGQEAEVTVKVGSIKERELPDADDDFAQLASEFDTIGELKDSLTEQVKGRKRIAQADEIRDETITALLDKIEIPVPEKILEEQIGNNLHEAVHGLDHNEERLNELLQEQGSSREEFDKDMRESATKSIKTELLLDVIADKFDINVDQQDLTERLVLMSRQYGIEPQQLVQYLTQQQQLPGLYVDVRRGKAIAEVIRQAKVTDSTGADVDVDAVLGPRRGGADEAGAEAEAAEEKPAKAKKSADSEKTDKSEKAEKKSKKKSKDDDAE.

The 82-residue stretch at 162-243 (GDFVSIDLSA…VGSIKERELP (82 aa)) folds into the PPIase FKBP-type domain. Residues 433-490 (VDAVLGPRRGGADEAGAEAEAAEEKPAKAKKSADSEKTDKSEKAEKKSKKKSKDDDAE) form a disordered region. A compositionally biased stretch (basic and acidic residues) spans 454 to 477 (AEEKPAKAKKSADSEKTDKSEKAE).

Belongs to the FKBP-type PPIase family. Tig subfamily.

It localises to the cytoplasm. The enzyme catalyses [protein]-peptidylproline (omega=180) = [protein]-peptidylproline (omega=0). Its function is as follows. Involved in protein export. Acts as a chaperone by maintaining the newly synthesized protein in an open conformation. Functions as a peptidyl-prolyl cis-trans isomerase. This is Trigger factor from Mycobacteroides abscessus (strain ATCC 19977 / DSM 44196 / CCUG 20993 / CIP 104536 / JCM 13569 / NCTC 13031 / TMC 1543 / L948) (Mycobacterium abscessus).